Reading from the N-terminus, the 205-residue chain is MISTDPWAGAVQDIIAAGRRMDRFGWVPATAGNISRRLPDGRIAITRSGGHKGHLTADGVIEVTADGRAVRAGDRPSAETLLHCHVYEASPDVGAVLHGHSVASTVLSMMEQGDAILLSGYEVLKVFEGQQTHDTTVRLPVFDNDQDIARLSGVVAPYLGRMPAGYVIRGHGVYVWGGTMDVALARLEGLEFLLACELERRKVAR.

Zn(2+) is bound by residues H98 and H100.

The protein belongs to the aldolase class II family. MtnB subfamily. Requires Zn(2+) as cofactor.

The enzyme catalyses 5-(methylsulfanyl)-D-ribulose 1-phosphate = 5-methylsulfanyl-2,3-dioxopentyl phosphate + H2O. Its pathway is amino-acid biosynthesis; L-methionine biosynthesis via salvage pathway; L-methionine from S-methyl-5-thio-alpha-D-ribose 1-phosphate: step 2/6. Catalyzes the dehydration of methylthioribulose-1-phosphate (MTRu-1-P) into 2,3-diketo-5-methylthiopentyl-1-phosphate (DK-MTP-1-P). This is Methylthioribulose-1-phosphate dehydratase from Gluconacetobacter diazotrophicus (strain ATCC 49037 / DSM 5601 / CCUG 37298 / CIP 103539 / LMG 7603 / PAl5).